The chain runs to 224 residues: Glutathione S-transferase U28 (224 aa).

A GST N-terminal domain is found at 6 to 85; it reads SKVVVLDFWA…YIDETWTDAA (80 aa). Residues 16-17, 42-43, 56-57, and 69-70 contribute to the glutathione site; these read SP, NK, KV, and ES. Positions 91–217 constitute a GST C-terminal domain; that stretch reads DPQSRATARF…EKVYQQVLKL (127 aa). Thr-154 is modified (phosphothreonine).

The protein belongs to the GST superfamily. Tau family.

The protein resides in the cytoplasm. The protein localises to the cytosol. The enzyme catalyses RX + glutathione = an S-substituted glutathione + a halide anion + H(+). Its function is as follows. May be involved in the conjugation of reduced glutathione to a wide number of exogenous and endogenous hydrophobic electrophiles and have a detoxification role against certain herbicides. This is Glutathione S-transferase U28 (GSTU28) from Arabidopsis thaliana (Mouse-ear cress).